We begin with the raw amino-acid sequence, 216 residues long: MOB kinase activator 3B (216 aa).

Residues Cys-82, Cys-87, His-164, and His-169 each contribute to the Zn(2+) site.

Functionally, modulates LATS1 expression in the Hippo signaling pathway which plays a pivotal role in organ size control and tumor suppression by restricting proliferation and promoting apoptosis. This Mus musculus (Mouse) protein is MOB kinase activator 3B (Mob3b).